The sequence spans 462 residues: L-seryl-tRNA(Sec) selenium transferase (462 aa).

The residue at position 295 (lysine 295) is an N6-(pyridoxal phosphate)lysine.

It belongs to the SelA family. As to quaternary structure, homodecamer; pentamer of dimers. Binds only one seryl-tRNA(Sec) per dimer. It depends on pyridoxal 5'-phosphate as a cofactor.

It localises to the cytoplasm. It catalyses the reaction L-seryl-tRNA(Sec) + selenophosphate + H(+) = L-selenocysteinyl-tRNA(Sec) + phosphate. Its pathway is aminoacyl-tRNA biosynthesis; selenocysteinyl-tRNA(Sec) biosynthesis; selenocysteinyl-tRNA(Sec) from L-seryl-tRNA(Sec) (bacterial route): step 1/1. Its function is as follows. Converts seryl-tRNA(Sec) to selenocysteinyl-tRNA(Sec) required for selenoprotein biosynthesis. The protein is L-seryl-tRNA(Sec) selenium transferase of Klebsiella pneumoniae (strain 342).